The primary structure comprises 797 residues: Outer membrane protein assembly factor BamA (797 aa).

Residues 1–19 form the signal peptide; it reads MKKLLIASLLFGTTTTVFA. POTRA domains follow at residues 22 to 89, 90 to 170, 173 to 259, 262 to 341, and 344 to 418; these read FVAK…VVAK, SIIS…INED, AKLA…VNEG, YDLR…VDAG, and LTVR…VKER.

Belongs to the BamA family. As to quaternary structure, part of the Bam complex.

The protein localises to the cell outer membrane. Functionally, part of the outer membrane protein assembly complex, which is involved in assembly and insertion of beta-barrel proteins into the outer membrane. This is Outer membrane protein assembly factor BamA from Haemophilus influenzae.